Here is a 263-residue protein sequence, read N- to C-terminus: UPF0246 protein Mmar10_0828 (263 aa).

The protein belongs to the UPF0246 family.

The protein is UPF0246 protein Mmar10_0828 of Maricaulis maris (strain MCS10) (Caulobacter maris).